The chain runs to 234 residues: Large ribosomal subunit protein uL1 (234 aa).

This sequence belongs to the universal ribosomal protein uL1 family. As to quaternary structure, part of the 50S ribosomal subunit.

Its function is as follows. Binds directly to 23S rRNA. The L1 stalk is quite mobile in the ribosome, and is involved in E site tRNA release. Functionally, protein L1 is also a translational repressor protein, it controls the translation of the L11 operon by binding to its mRNA. This chain is Large ribosomal subunit protein uL1, found in Erwinia tasmaniensis (strain DSM 17950 / CFBP 7177 / CIP 109463 / NCPPB 4357 / Et1/99).